Reading from the N-terminus, the 457-residue chain is Siroheme synthase (457 aa).

Residues 1 to 204 form a precorrin-2 dehydrogenase /sirohydrochlorin ferrochelatase region; that stretch reads MDHLPIFCQL…NDQKAITETT (204 aa). NAD(+) is bound by residues 22 to 23 and 43 to 44; these read DV and LA. Ser-128 is subject to Phosphoserine. Residues 216 to 457 form a uroporphyrinogen-III C-methyltransferase region; sequence GEVVLVGAGP…RDKLNWFSNH (242 aa). Pro-225 lines the S-adenosyl-L-methionine pocket. Asp-248 functions as the Proton acceptor in the catalytic mechanism. Residue Lys-270 is the Proton donor of the active site. Residues 301–303, Ile-306, 331–332, Met-382, and Gly-411 each bind S-adenosyl-L-methionine; these read GGD and TA.

The protein in the N-terminal section; belongs to the precorrin-2 dehydrogenase / sirohydrochlorin ferrochelatase family. In the C-terminal section; belongs to the precorrin methyltransferase family.

The enzyme catalyses uroporphyrinogen III + 2 S-adenosyl-L-methionine = precorrin-2 + 2 S-adenosyl-L-homocysteine + H(+). It carries out the reaction precorrin-2 + NAD(+) = sirohydrochlorin + NADH + 2 H(+). The catalysed reaction is siroheme + 2 H(+) = sirohydrochlorin + Fe(2+). It functions in the pathway cofactor biosynthesis; adenosylcobalamin biosynthesis; precorrin-2 from uroporphyrinogen III: step 1/1. The protein operates within cofactor biosynthesis; adenosylcobalamin biosynthesis; sirohydrochlorin from precorrin-2: step 1/1. It participates in porphyrin-containing compound metabolism; siroheme biosynthesis; precorrin-2 from uroporphyrinogen III: step 1/1. Its pathway is porphyrin-containing compound metabolism; siroheme biosynthesis; siroheme from sirohydrochlorin: step 1/1. It functions in the pathway porphyrin-containing compound metabolism; siroheme biosynthesis; sirohydrochlorin from precorrin-2: step 1/1. Multifunctional enzyme that catalyzes the SAM-dependent methylations of uroporphyrinogen III at position C-2 and C-7 to form precorrin-2 via precorrin-1. Then it catalyzes the NAD-dependent ring dehydrogenation of precorrin-2 to yield sirohydrochlorin. Finally, it catalyzes the ferrochelation of sirohydrochlorin to yield siroheme. This is Siroheme synthase from Escherichia coli O8 (strain IAI1).